Here is a 577-residue protein sequence, read N- to C-terminus: Probable cytochrome c biosynthesis protein (577 aa).

Belongs to the CcmF/CycK/Ccl1/NrfE/CcsA family.

The protein localises to the mitochondrion. Its function is as follows. Could be involved in assembly and maturation of cytochromes c. May play a role in guidance of apocytochromes and heme groups for the covalent linkage introduced by the cytochrome-c-heme lyase. This Oenothera berteroana (Bertero's evening primrose) protein is Probable cytochrome c biosynthesis protein.